The following is a 288-amino-acid chain: RELT-like protein 1 (288 aa).

The N-terminal stretch at 1 to 23 (MAPPAASGIPSIAPSLGPTAVWL) is a signal peptide. Residues 24-57 (GNRSDLGDVQALASRDLPTTTVTAGNNNKPEHLE) lie on the Extracellular side of the membrane. N-linked (GlcNAc...) asparagine glycosylation is present at Asn25. A helical transmembrane segment spans residues 58–78 (YVAFVLVPVFFIMGLLGILIC). Over 79-288 (HVLKKKGYRC…EGTQERRSSE (210 aa)) the chain is Cytoplasmic. 2 disordered regions span residues 145–172 (FEPESPMSPNAPGSPTSPGSPLSPGAAS) and 237–288 (HKSN…RSSE). The span at 152-172 (SPNAPGSPTSPGSPLSPGAAS) shows a compositional bias: low complexity. Basic and acidic residues predominate over residues 237 to 246 (HKSNSKERKS).

The protein belongs to the RELT family.

It localises to the cell membrane. The sequence is that of RELT-like protein 1 (RELL1) from Gallus gallus (Chicken).